Reading from the N-terminus, the 435-residue chain is Serine carboxypeptidase-like 16 (435 aa).

A signal peptide spans 1 to 23 (MGSWIPKLLLLQLVLLLTKHADS). 3 cysteine pairs are disulfide-bonded: cysteine 82–cysteine 325, cysteine 246–cysteine 260, and cysteine 284–cysteine 291. An N-linked (GlcNAc...) asparagine glycan is attached at asparagine 103. Residue serine 178 is part of the active site. Asparagine 305 carries N-linked (GlcNAc...) asparagine glycosylation. Aspartate 360 is a catalytic residue. The N-linked (GlcNAc...) asparagine glycan is linked to asparagine 376. The active site involves histidine 413.

Belongs to the peptidase S10 family. In terms of tissue distribution, expressed in seedlings, roots and leaves.

It is found in the secreted. In terms of biological role, probable carboxypeptidase. This is Serine carboxypeptidase-like 16 (SCPL16) from Arabidopsis thaliana (Mouse-ear cress).